A 121-amino-acid chain; its full sequence is Large ribosomal subunit protein uL18 (121 aa).

It belongs to the universal ribosomal protein uL18 family. In terms of assembly, part of the 50S ribosomal subunit; part of the 5S rRNA/L5/L18/L25 subcomplex. Contacts the 5S and 23S rRNAs.

In terms of biological role, this is one of the proteins that bind and probably mediate the attachment of the 5S RNA into the large ribosomal subunit, where it forms part of the central protuberance. The protein is Large ribosomal subunit protein uL18 of Bdellovibrio bacteriovorus (strain ATCC 15356 / DSM 50701 / NCIMB 9529 / HD100).